The following is a 427-amino-acid chain: MTNKEAFSEAKKYIPGGVNSPVRAFGSVGGEPVMIDHARGAYLYDVEGKKYLDFIQSWGPLIFGHCDKDIEEAIISAVKQGVSYGAPSPKETALAKLICDEFKQIDKIRFVSSGTEATMSAIRVARGYAKKDGLIKFEGCYHGHSDALLIKAGSGATTYGNASSGGVPQDVVKNTFLAIYNDIESVKAIFENNKDKIGVVIIEPIAGNMGLVPADKKFLRELRELCDKFGAVLILDEVMSGFRASRLGSYPFHEVDADLVTFGKVIGGGMNVAAFGGKAKIMDCLSPEGAVYQAGTLSGNPVAMSAGIAAISKINSDVNLYVRLEKLALKLMDGFKEAAKSAGITIQTEVRGSMFGYFFTDHVVKNYDDALKSDTKLFAKFHQAMLKRGIYLAPSQFETGFICDAMSEADIDLAVNAAKEAFLEIKA.

At K264 the chain carries N6-(pyridoxal phosphate)lysine.

It belongs to the class-III pyridoxal-phosphate-dependent aminotransferase family. HemL subfamily. As to quaternary structure, homodimer. Pyridoxal 5'-phosphate serves as cofactor.

It is found in the cytoplasm. The catalysed reaction is (S)-4-amino-5-oxopentanoate = 5-aminolevulinate. The protein operates within porphyrin-containing compound metabolism; protoporphyrin-IX biosynthesis; 5-aminolevulinate from L-glutamyl-tRNA(Glu): step 2/2. This Campylobacter concisus (strain 13826) protein is Glutamate-1-semialdehyde 2,1-aminomutase.